We begin with the raw amino-acid sequence, 374 residues long: 4-galactosyl-N-acetylglucosaminide 3-alpha-L-fucosyltransferase FUT5 (374 aa).

Over 1 to 15 (MDPLGPAKPQWLWRR) the chain is Cytoplasmic. A helical; Signal-anchor for type II membrane protein membrane pass occupies residues 16–34 (CLAGLLFQLLVAVCFFSYL). The Lumenal portion of the chain corresponds to 35–374 (RVSQDHATGS…TVRSIAAWFT (340 aa)). Asparagine 60, asparagine 105, asparagine 167, and asparagine 198 each carry an N-linked (GlcNAc...) asparagine glycan.

The protein belongs to the glycosyltransferase 10 family.

It localises to the golgi apparatus. Its subcellular location is the golgi stack membrane. The enzyme catalyses a beta-D-galactosyl-(1-&gt;3)-N-acetyl-beta-D-glucosaminyl derivative + GDP-beta-L-fucose = a beta-D-galactosyl-(1-&gt;3)-[alpha-L-fucosyl-(1-&gt;4)]-N-acetyl-beta-D-glucosaminyl derivative + GDP + H(+). It carries out the reaction an N-acetyl-alpha-neuraminyl-(2-&gt;3)-beta-D-galactosyl-(1-&gt;4)-N-acetyl-beta-D-glucosaminyl derivative + GDP-beta-L-fucose = an alpha-Neu5Ac-(2-&gt;3)-beta-D-Gal-(1-&gt;4)-[alpha-L-Fuc-(1-&gt;3)]-beta-D-GlcNAc derivative + GDP + H(+). The catalysed reaction is an alpha-Neu5Ac-(2-&gt;3)-beta-D-Gal-(1-&gt;4)-beta-D-GlcNAc-(1-&gt;3)-beta-D-Gal-(1-&gt;4)-[alpha-L-Fuc-(1-&gt;3)]-beta-D-GlcNAc derivative + GDP-beta-L-fucose = an alpha-Neu5Ac-(2-&gt;3)-beta-D-Gal-(1-&gt;4)-[alpha-L-Fuc-(1-&gt;3)]-beta-D-GlcNAc-(1-&gt;3)-beta-D-Gal-(1-&gt;4)-[alpha-L-Fuc-(1-&gt;3)]-beta-D-GlcNAc derivative + GDP + H(+). It catalyses the reaction a beta-D-galactosyl-(1-&gt;4)-N-acetyl-beta-D-glucosaminyl derivative + GDP-beta-L-fucose = a beta-D-galactosyl-(1-&gt;4)-[alpha-L-fucosyl-(1-&gt;3)]-N-acetyl-beta-D-glucosaminyl derivative + GDP + H(+). The enzyme catalyses a neolactoside nLc4Cer + GDP-beta-L-fucose = a neolactoside III(3)-alpha-Fuc-nLc4Cer + GDP + H(+). It carries out the reaction a neolactoside nLc6Cer + GDP-beta-L-fucose = beta-D-galactosyl-(1-&gt;4)-N-acetyl-beta-D-glucosaminyl-(1-&gt;3)-beta-D-galactosyl-(1-&gt;4)-[alpha-L-fucosyl-(1-&gt;3)]-N-acetyl-beta-D-glucosaminyl-(1-&gt;3)-beta-D-galactosyl-(1-&gt;4)-beta-D-glucosyl-(1&lt;-&gt;1')-ceramide + GDP + H(+). The catalysed reaction is a neolactoside nLc6Cer(d18:1(4E)) + GDP-beta-L-fucose = a neolactoside III(3)-alpha-Fuc-nLc6Cer(d18:1(4E)) + GDP + H(+). It catalyses the reaction a neolactoside nLc4Cer(d18:1(4E)) + GDP-beta-L-fucose = a neolactoside III(3)-alpha-Fuc-nLc4Cer(d18:1(4E)) + GDP + H(+). The enzyme catalyses a neolactoside VI(3)-alpha-NeuNAc-nLc6Cer + GDP-beta-L-fucose = a neolactoside VI(3)-alpha-NeuAc,III(3)-alphaFuc-nLc6Cer + GDP + H(+). It carries out the reaction beta-D-galactosyl-(1-&gt;4)-N-acetyl-D-glucosamine + GDP-beta-L-fucose = beta-D-galactosyl-(1-&gt;4)-[alpha-L-fucosyl-(1-&gt;3)]-N-acetyl-D-glucosamine + GDP + H(+). The catalysed reaction is N-acetyl-alpha-neuraminosyl-(2-&gt;3)-beta-D-galactosyl-(1-&gt;4)-N-acetyl-beta-D-glucosamine + GDP-beta-L-fucose = N-acetyl-alpha-neuraminosyl-(2-&gt;3)-beta-D-galactosyl-(1-&gt;4)-[alpha-L-fucosyl-(1-&gt;3)]-N-acetyl-beta-D-glucosamine + GDP + H(+). It catalyses the reaction alpha-L-Fuc-(1-&gt;2)-beta-D-Gal-(1-&gt;4)-D-GlcNAc + GDP-beta-L-fucose = alpha-L-Fuc-(1-&gt;2)-beta-D-Gal-(1-&gt;4)-[alpha-L-Fuc-(1-&gt;3)]-D-GlcNAc + GDP + H(+). The enzyme catalyses an alpha-Neu5Ac-(2-&gt;3)-beta-D-Gal-(1-&gt;3)-D-GlcNAc derivative + GDP-beta-L-fucose = an alpha-Neu5Ac-(2-&gt;3)-beta-D-Gal-(1-&gt;3)-[alpha-L-Fuc-(1-&gt;4)]-beta-D-GlcNAc derivative + GDP + H(+). The protein operates within protein modification; protein glycosylation. Its function is as follows. Catalyzes preferentially the transfer of L-fucose, from a guanosine diphosphate-beta-L-fucose, to the N-acetyl-beta-D-glucosamine (GlcNAc) of an N-acetyllactosamine unit (type 2 chain) of an oligosaccharide, or a glycoprotein- and a glycolipid-linked N-acetyllactosamine unit via an alpha (1,3) linkage and participates in the surface expression of VIM-2, Lewis X/SSEA-1 and sialyl Lewis X antigens. Preferentially transfers fucose to the GlcNAc of an internal N-acetyllactosamine unit of a poly-N-acetyllactosamine chain acceptor substrate. Also catalyzes to a lesser extend the transfer of L-fucose to the GlcNAc of a type 1 (beta-D-galactosyl-(1-&gt;3)-N-acetyl-beta-D-glucosaminyl) or H-type 1 (alpha-L-Fuc-(1-&gt;2)-beta-D-Gal-(1-&gt;3)-D-GlcNAc) chain oligosaccharide via an alpha (1,4) linkage. Preferentially catalyzes sialylated type 2 oligosaccharide acceptors over neutral type 2 or H type 2 (alpha-L-Fuc-(1-&gt;2)-beta-D-Gal-(1-&gt;4)-D-GlcNAc) oligosaccharide acceptors. Lactose-based structures are also acceptor substrates. This Gorilla gorilla gorilla (Western lowland gorilla) protein is 4-galactosyl-N-acetylglucosaminide 3-alpha-L-fucosyltransferase FUT5.